The following is a 309-amino-acid chain: Tyrosine recombinase XerD (309 aa).

Residues 3–88 (MRASLAIENF…ALRQFFRFLY (86 aa)) enclose the Core-binding (CB) domain. The Tyr recombinase domain maps to 109–302 (PLPKIMSVEN…LEERLHKLVS (194 aa)). Active-site residues include Arg-158, Lys-182, His-254, Arg-257, and His-280. Tyr-289 functions as the O-(3'-phospho-DNA)-tyrosine intermediate in the catalytic mechanism.

It belongs to the 'phage' integrase family. XerD subfamily. In terms of assembly, forms a cyclic heterotetrameric complex composed of two molecules of XerC and two molecules of XerD.

It is found in the cytoplasm. Functionally, site-specific tyrosine recombinase, which acts by catalyzing the cutting and rejoining of the recombining DNA molecules. The XerC-XerD complex is essential to convert dimers of the bacterial chromosome into monomers to permit their segregation at cell division. It also contributes to the segregational stability of plasmids. The sequence is that of Tyrosine recombinase XerD from Brucella suis biovar 1 (strain 1330).